We begin with the raw amino-acid sequence, 1868 residues long: Inactive histone-lysine N-methyltransferase 2E (1868 aa).

Residues 63 to 66 (DHNY) carry the HCFC1-binding motif (HBM) motif. The segment at 118-166 (VTRCICGFTHDDGYMICCDKCSVWQHIDCMGIDRQHIPDTYLCERCQPR) adopts a PHD-type zinc-finger fold. Residues cysteine 121, cysteine 123, cysteine 135, cysteine 138, histidine 143, cysteine 146, cysteine 160, and cysteine 163 each contribute to the Zn(2+) site. 3 disordered regions span residues 178 to 197 (RRKR…SGDE), 217 to 268 (ASRV…SSDS), and 308 to 329 (GSGN…SLFR). Residues 330–447 (PPVESHIQKN…KGTEITIAFD (118 aa)) enclose the SET domain. O-linked (GlcNAc) serine glycosylation occurs at serine 435. O-linked (GlcNAc) threonine glycosylation occurs at threonine 440. Residues 472-504 (KRSSESTENINSGYETRRKKGKKEKDTSKEKDI) form a disordered region. Residues 494 to 504 (KEKDTSKEKDI) are compositionally biased toward basic and acidic residues. The stretch at 559–613 (VEMESEEQIAERKRKMTREERKMEAILQAFARLEKREKRREQALERISTAKTEVK) forms a coiled coil. Over residues 646-670 (NRTKQRKSFSRSRTHIGQQRRRHRT) the composition is skewed to basic residues. The tract at residues 646–682 (NRTKQRKSFSRSRTHIGQQRRRHRTVSMCSDIPPSSP) is disordered. Phosphoserine occurs at positions 837 and 845. Residues 884–908 (YSESSTPTPSPYATPTHTDITPTDP) are compositionally biased toward low complexity. 2 disordered regions span residues 884-924 (YSES…ETYR) and 1038-1068 (SMET…SSWV). A compositionally biased stretch (polar residues) spans 1049-1068 (PSNQLDSTHSGRGTMYSSWV). Serine 1070 carries the phosphoserine modification. Disordered stretches follow at residues 1165 to 1222 (KRQR…PPPA), 1236 to 1315 (SSEE…SNHI), 1334 to 1565 (PDAE…QNQQ), and 1585 to 1842 (VFTS…QASP). Positions 1184–1197 (SVSPHPSGSLSSSG) are enriched in low complexity. Residues 1203–1213 (SSENGEQAENQ) show a composition bias toward polar residues. Serine 1282 is modified (phosphoserine). Basic and acidic residues predominate over residues 1282–1291 (SDHRKDKDSG). 2 stretches are compositionally biased toward low complexity: residues 1294 to 1312 (SPCV…SSHS) and 1348 to 1363 (PSPD…SKPG). Serine 1364 is subject to Phosphoserine. Composition is skewed to polar residues over residues 1389-1421 (ATVS…QNHA), 1451-1463 (HTEN…TPHT), and 1488-1498 (SQSPQVGTPQR). The segment covering 1506-1518 (AAAQNLQANPQQA) has biased composition (low complexity). A compositionally biased stretch (polar residues) spans 1519 to 1547 (TSGALFTQTPSGQSSATYSQFNQQSLNST). Residues 1548–1558 (APPPPPPPPPS) show a composition bias toward pro residues. The segment covering 1585–1603 (VFTSGPNQALPGSTSQQSV) has biased composition (polar residues). Pro residues predominate over residues 1631–1642 (VPPPPPPPPAPG). Residues 1647 to 1656 (QQPSSHQQHS) show a composition bias toward polar residues. A compositionally biased stretch (pro residues) spans 1682–1692 (LPPPPPPPGPA). Residues 1706–1716 (QSLQAQHQHVV) are compositionally biased toward polar residues. Positions 1719–1732 (APPPPPPPPPPPPA) are enriched in pro residues. Over residues 1806–1816 (QGPNSIPTPTA) the composition is skewed to polar residues.

Belongs to the class V-like SAM-binding methyltransferase superfamily. Histone-lysine methyltransferase family. TRX/MLL subfamily. Component of a complex composed of KMT2E, OGT and USP7; the complex stabilizes KMT2E, preventing KMT2E ubiquitination and proteasomal-mediated degradation. Interacts (via N-terminus) with OGT (via TRP repeats). Interacts with deubiquitinating enzyme USP7 (via MATH domain). Interacts (via HBM motif) with HCFC1 (via Kelch domain). Interacts with E2F1; the interaction is probably indirect and is mediated via HCFC1. Post-translationally, ubiquitinated. Deubiquitinated by USP7. O-glycosylated at Ser-435 and Thr-440 in the SET domain by OGT which probably prevents KMT2E proteasomal-mediated degradation.

Its subcellular location is the chromosome. It localises to the cytoplasm. It is found in the cytoskeleton. The protein localises to the microtubule organizing center. The protein resides in the centrosome. Its subcellular location is the nucleus speckle. Associates with chromatin regions downstream of transcriptional start sites of active genes and thus regulates gene transcription. Chromatin interaction is mediated via the binding to tri-methylated histone H3 at 'Lys-4' (H3K4me3). Key regulator of hematopoiesis involved in terminal myeloid differentiation and in the regulation of hematopoietic stem cell (HSCs) self-renewal by a mechanism that involves DNA methylation. Also acts as an important cell cycle regulator, participating in cell cycle regulatory network machinery at multiple cell cycle stages including G1/S transition, S phase progression and mitotic entry. Recruited to E2F1 responsive promoters by HCFC1 where it stimulates tri-methylation of histone H3 at 'Lys-4' and transcriptional activation and thereby facilitates G1 to S phase transition. During myoblast differentiation, required to suppress inappropriate expression of S-phase-promoting genes and maintain expression of determination genes in quiescent cells. The protein is Inactive histone-lysine N-methyltransferase 2E (Kmt2e) of Mus musculus (Mouse).